A 76-amino-acid chain; its full sequence is MLQLKLFAVLLTCLLLLGQVNSSPVPEVSSAKRSRRMTPFWRGVSLRPIGASCRDDSECITRLCRKRRCSLSVAQE.

The first 22 residues, 1-22 (MLQLKLFAVLLTCLLLLGQVNS), serve as a signal peptide directing secretion. Positions 23 to 36 (SPVPEVSSAKRSRR) are excised as a propeptide. 2 disulfides stabilise this stretch: Cys53/Cys64 and Cys59/Cys69.

The protein belongs to the LEAP2 family.

It localises to the secreted. In terms of biological role, has an antimicrobial activity. The sequence is that of Liver-expressed antimicrobial peptide 2 (Leap2) from Mus musculus (Mouse).